We begin with the raw amino-acid sequence, 276 residues long: Formamidopyrimidine-DNA glycosylase (276 aa).

Residue proline 2 is the Schiff-base intermediate with DNA of the active site. Residue glutamate 3 is the Proton donor of the active site. The active-site Proton donor; for beta-elimination activity is lysine 58. The DNA site is built by histidine 92, arginine 111, and lysine 154. The segment at 239–273 (QVYGHVGEPCPVCGTKFEKIKVNGRGTTFCPHCQV) adopts an FPG-type zinc-finger fold. Arginine 263 serves as the catalytic Proton donor; for delta-elimination activity.

Belongs to the FPG family. In terms of assembly, monomer. Zn(2+) serves as cofactor.

It carries out the reaction Hydrolysis of DNA containing ring-opened 7-methylguanine residues, releasing 2,6-diamino-4-hydroxy-5-(N-methyl)formamidopyrimidine.. The catalysed reaction is 2'-deoxyribonucleotide-(2'-deoxyribose 5'-phosphate)-2'-deoxyribonucleotide-DNA = a 3'-end 2'-deoxyribonucleotide-(2,3-dehydro-2,3-deoxyribose 5'-phosphate)-DNA + a 5'-end 5'-phospho-2'-deoxyribonucleoside-DNA + H(+). In terms of biological role, involved in base excision repair of DNA damaged by oxidation or by mutagenic agents. Acts as a DNA glycosylase that recognizes and removes damaged bases. Has a preference for oxidized purines, such as 7,8-dihydro-8-oxoguanine (8-oxoG). Has AP (apurinic/apyrimidinic) lyase activity and introduces nicks in the DNA strand. Cleaves the DNA backbone by beta-delta elimination to generate a single-strand break at the site of the removed base with both 3'- and 5'-phosphates. This chain is Formamidopyrimidine-DNA glycosylase, found in Lactobacillus helveticus (strain DPC 4571).